Reading from the N-terminus, the 333-residue chain is UPF0324 membrane protein WS2204 (333 aa).

9 helical membrane-spanning segments follow: residues serine 4–alanine 26, phenylalanine 31–tyrosine 53, isoleucine 59–phenylalanine 81, leucine 88–glycine 110, serine 125–serine 147, threonine 154–tyrosine 176, valine 218–leucine 240, proline 253–leucine 275, and alanine 310–leucine 332.

It belongs to the UPF0324 family.

It localises to the cell membrane. The polypeptide is UPF0324 membrane protein WS2204 (Wolinella succinogenes (strain ATCC 29543 / DSM 1740 / CCUG 13145 / JCM 31913 / LMG 7466 / NCTC 11488 / FDC 602W) (Vibrio succinogenes)).